Reading from the N-terminus, the 98-residue chain is NADH-ubiquinone oxidoreductase chain 4L (98 aa).

The next 3 membrane-spanning stretches (helical) occupy residues 1–21 (MSLTYLNIMLAFSTSLLGLLM), 31–51 (LCLEGLVLSLFVLTTLMVLTI), and 61–81 (IILLVFAACEAALGLSLLVVV).

The protein belongs to the complex I subunit 4L family. As to quaternary structure, core subunit of respiratory chain NADH dehydrogenase (Complex I) which is composed of 45 different subunits.

It is found in the mitochondrion inner membrane. It carries out the reaction a ubiquinone + NADH + 5 H(+)(in) = a ubiquinol + NAD(+) + 4 H(+)(out). Core subunit of the mitochondrial membrane respiratory chain NADH dehydrogenase (Complex I) which catalyzes electron transfer from NADH through the respiratory chain, using ubiquinone as an electron acceptor. Part of the enzyme membrane arm which is embedded in the lipid bilayer and involved in proton translocation. This chain is NADH-ubiquinone oxidoreductase chain 4L (MT-ND4L), found in Chalinolobus tuberculatus (New Zealand long-tailed bat).